Here is an 88-residue protein sequence, read N- to C-terminus: Beta-insect excitatory toxin 2 (88 aa).

The signal sequence occupies residues 1-18 (MKFLLLFLVVLPIMGVLG). The 64-residue stretch at 20 to 83 (KNGYAVDSSG…ISDTRKSYCD (64 aa)) folds into the LCN-type CS-alpha/beta domain. 4 disulfides stabilise this stretch: C34-C55, C40-C60, C44-C62, and C56-C82.

Belongs to the long (4 C-C) scorpion toxin superfamily. Sodium channel inhibitor family. Beta subfamily. Expressed by the venom gland.

It localises to the secreted. Functionally, excitatory insect beta-toxins induce a spastic paralysis. They bind voltage-independently at site-4 of sodium channels (Nav) and shift the voltage of activation toward more negative potentials thereby affecting sodium channel activation and promoting spontaneous and repetitive firing. This toxin is active only on insects. This Androctonus australis (Sahara scorpion) protein is Beta-insect excitatory toxin 2.